The following is an 80-amino-acid chain: MMKLVLLSVIVILFSLIGSIHGANVPGNYPLDSSGNKYPCTVLGDNQSCIDVCKKHGVKYGYCYGFKCWCEYLKDKNVSL.

Positions 1–22 are cleaved as a signal peptide; it reads MMKLVLLSVIVILFSLIGSIHG. The LCN-type CS-alpha/beta domain occupies 25-80; the sequence is VPGNYPLDSSGNKYPCTVLGDNQSCIDVCKKHGVKYGYCYGFKCWCEYLKDKNVSL. Disulfide bonds link Cys-40–Cys-63, Cys-49–Cys-68, and Cys-53–Cys-70.

This sequence belongs to the long (3 C-C) scorpion toxin superfamily. Sodium/Potassium channel inhibitor family. Expressed by the venom gland.

The protein resides in the secreted. In terms of biological role, probable neurotoxin that inhibits ion channels. Is toxic to mice. In Androctonus crassicauda (Arabian fat-tailed scorpion), this protein is Toxin Acra I-3.